Reading from the N-terminus, the 324-residue chain is Probable pectinesterase A (324 aa).

The N-terminal stretch at 1 to 19 (MYLPSLVLGLLGFGLTAST) is a signal peptide. N-linked (GlcNAc...) asparagine glycosylation is present at asparagine 27. Residue glutamine 142 participates in substrate binding. The active-site Proton donor is the aspartate 165. Aspartate 186 functions as the Nucleophile in the catalytic mechanism. Residues arginine 246 and tryptophan 248 each coordinate substrate.

Belongs to the pectinesterase family.

It localises to the secreted. The catalysed reaction is [(1-&gt;4)-alpha-D-galacturonosyl methyl ester](n) + n H2O = [(1-&gt;4)-alpha-D-galacturonosyl](n) + n methanol + n H(+). It participates in glycan metabolism; pectin degradation; 2-dehydro-3-deoxy-D-gluconate from pectin: step 1/5. Involved in maceration and soft-rotting of plant tissue. This chain is Probable pectinesterase A (pmeA), found in Aspergillus fumigatus (strain CBS 144.89 / FGSC A1163 / CEA10) (Neosartorya fumigata).